The sequence spans 265 residues: Interleukin-2 receptor subunit alpha (265 aa).

The N-terminal stretch at 1–21 is a signal peptide; it reads MDSYLLMWGLLTLIMVPGCFA. Residues 22-84 form the Sushi 1 domain; that stretch reads ELCDDDPPEI…SWDNQCQCTS (63 aa). Over 22–240 the chain is Extracellular; sequence ELCDDDPPEI…ETFIFTTEYQ (219 aa). 3 cysteine pairs are disulfide-bonded: C24–C67, C49–C80, and C51–C82. N70 and N89 each carry an N-linked (GlcNAc...) asparagine glycan. The segment covering 87 to 98 has biased composition (polar residues); it reads TRNTTKQVTPQP. The segment at 87 to 123 is disordered; that stretch reads TRNTTKQVTPQPEEQKERKTTEMQSPMQPVDQASLPG. The 64-residue stretch at 123–186 folds into the Sushi 2 domain; it reads GHCREPPPWE…WTQPQLICTG (64 aa). 2 cysteine pairs are disulfide-bonded: C125–C168 and C152–C184. Positions 190-210 are disordered; the sequence is TSQFPGEEKPQASPEGRPESE. The span at 195–209 shows a compositional bias: basic and acidic residues; the sequence is GEEKPQASPEGRPES. Residues 241–259 traverse the membrane as a helical segment; the sequence is VAVAGCVFLLISVLLLSGL. The Cytoplasmic segment spans residues 260-265; that stretch reads TWQRRQ.

As to quaternary structure, non-covalent dimer of an alpha and a beta subunit. IL2R exists in 3 different forms: a high affinity dimer, an intermediate affinity monomer (beta subunit), and a low affinity monomer (alpha subunit). The high and intermediate affinity forms also associate with a gamma subunit.

It is found in the membrane. Functionally, receptor for interleukin-2. The receptor is involved in the regulation of immune tolerance by controlling regulatory T cells (TREGs) activity. TREGs suppress the activation and expansion of autoreactive T-cells. The chain is Interleukin-2 receptor subunit alpha (IL2RA) from Pan troglodytes (Chimpanzee).